A 166-amino-acid chain; its full sequence is Lipoprotein signal peptidase (166 aa).

4 consecutive transmembrane segments (helical) span residues 11-31 (LNLV…LYIL), 42-62 (IYIT…AFGL), 69-89 (VIYN…IFMM), and 99-119 (FFAL…VYTA). Catalysis depends on residues Asp122 and Asp140. The helical transmembrane segment at 133–153 (WFVFNVADIFITIGVFCLILV) threads the bilayer.

It belongs to the peptidase A8 family.

The protein resides in the cell inner membrane. It carries out the reaction Release of signal peptides from bacterial membrane prolipoproteins. Hydrolyzes -Xaa-Yaa-Zaa-|-(S,diacylglyceryl)Cys-, in which Xaa is hydrophobic (preferably Leu), and Yaa (Ala or Ser) and Zaa (Gly or Ala) have small, neutral side chains.. It functions in the pathway protein modification; lipoprotein biosynthesis (signal peptide cleavage). Its function is as follows. This protein specifically catalyzes the removal of signal peptides from prolipoproteins. The chain is Lipoprotein signal peptidase from Pelagibacter ubique (strain HTCC1062).